The sequence spans 321 residues: Probable arabinan endo-1,5-alpha-L-arabinosidase A (321 aa).

A signal peptide spans 1–19 (MSASVFVVVASCLAALAHG). Catalysis depends on D34, which acts as the Proton acceptor. E200 serves as the catalytic Proton donor.

Belongs to the glycosyl hydrolase 43 family.

The protein resides in the secreted. It catalyses the reaction Endohydrolysis of (1-&gt;5)-alpha-arabinofuranosidic linkages in (1-&gt;5)-arabinans.. It functions in the pathway glycan metabolism; L-arabinan degradation. Functionally, endo-1,5-alpha-L-arabinanase involved in degradation of pectin. Its preferred substrate is linear 1,5-alpha-L-arabinan. This is Probable arabinan endo-1,5-alpha-L-arabinosidase A (abnA) from Aspergillus fumigatus (strain ATCC MYA-4609 / CBS 101355 / FGSC A1100 / Af293) (Neosartorya fumigata).